The sequence spans 268 residues: Large ribosomal subunit protein uL3 (268 aa).

Q156 carries the N5-methylglutamine modification. A compositionally biased stretch (low complexity) spans 242-259 (VENEAAPADADNAAPEAA). Positions 242–268 (VENEAAPADADNAAPEAAADGEEGTQA) are disordered.

This sequence belongs to the universal ribosomal protein uL3 family. As to quaternary structure, part of the 50S ribosomal subunit. Forms a cluster with proteins L14 and L19. Post-translationally, methylated by PrmB.

In terms of biological role, one of the primary rRNA binding proteins, it binds directly near the 3'-end of the 23S rRNA, where it nucleates assembly of the 50S subunit. This chain is Large ribosomal subunit protein uL3, found in Maricaulis maris (strain MCS10) (Caulobacter maris).